The chain runs to 381 residues: Guanine nucleotide-binding protein G(olf) subunit alpha (381 aa).

Residues 1 to 25 (MGCLGNSSKTAEDQGVDEKERREAN) form a disordered region. The N-palmitoyl glycine moiety is linked to residue Gly-2. Cys-3 carries the S-palmitoyl cysteine lipid modification. The span at 10–25 (TAEDQGVDEKERREAN) shows a compositional bias: basic and acidic residues. The region spanning 41 to 381 (ATHRLLLLGA…RMHLKQYELL (341 aa)) is the G-alpha domain. A G1 motif region spans residues 44-57 (RLLLLGAGESGKST). 6 residues coordinate GTP: Glu-52, Ser-53, Gly-54, Lys-55, Ser-56, and Thr-57. Ser-56 is a binding site for Mg(2+). The residue at position 178 (Thr-178) is a Phosphothreonine. A G2 motif region spans residues 183-191 (DLLRCRVLT). Leu-185, Arg-186, and Thr-191 together coordinate GTP. Mg(2+)-binding residues include Thr-191 and Asp-210. Positions 206 to 215 (FHMFDVGGQR) are G3 motif. 5 residues coordinate GTP: Gly-213, Asn-279, Lys-280, Asp-282, and Ala-353. Residues 275–282 (ILFLNKQD) form a G4 motif region. Positions 351–356 (TCAVDT) are G5 motif.

This sequence belongs to the G-alpha family. G(s) subfamily. As to quaternary structure, g proteins are composed of 3 units; alpha, beta and gamma. The alpha chain contains the guanine nucleotide binding site. Interacts with GAS2L2. Interacts (GDP-bound form) with RIC8B (via C-terminus); promoting GNAL folding and association with the plasma membrane.

The protein localises to the cell membrane. It carries out the reaction GTP + H2O = GDP + phosphate + H(+). Guanine nucleotide-binding protein (G protein) involved as transducer in olfactory signal transduction controlled by G protein-coupled receptors (GPCRs). Contains the guanine nucleotide binding site and alternates between an active, GTP-bound state and an inactive, GDP-bound state. Signaling by an activated GPCR promotes GDP release and GTP binding. The alpha subunit has a low GTPase activity that converts bound GTP to GDP, thereby terminating the signal. Both GDP release and GTP hydrolysis are modulated by numerous regulatory proteins. GNAL/G(olf) alpha specifically mediates olfactory signal transduction within the olfactory neuroepithelium and the basal ganglia following GPCRs activation. Acts by promoting the specific activation of adenylyl cyclase ADCY3, resulting in increased levels of the signaling molecule cAMP. In Mus musculus (Mouse), this protein is Guanine nucleotide-binding protein G(olf) subunit alpha.